Reading from the N-terminus, the 672-residue chain is Serine/threonine-protein kinase ppk16 (672 aa).

Residues 31 to 279 enclose the Protein kinase domain; it reads YRIESVVGEG…IDQIISHPYF (249 aa). ATP is bound by residues 37–45 and Lys-60; that span reads VGEGSFGKV. The Proton acceptor role is filled by Asp-148. At Ser-231 the chain carries Phosphoserine. Residues 375–384 show a composition bias toward polar residues; it reads VSVMSNNQDS. Disordered stretches follow at residues 375-396, 416-436, 464-572, and 632-672; these read VSVM…DSSN, DTLS…ENYL, NSFG…YSNV, and SGRK…TDLL. The span at 472–487 shows a compositional bias: polar residues; sequence NLPQTTHVDTGEQNTP. Residues 508-523 show a composition bias toward low complexity; it reads SNSQNSPSKSSNLSIN. A compositionally biased stretch (polar residues) spans 531 to 541; sequence LQNTVISPQPT. 2 stretches are compositionally biased toward low complexity: residues 549–572 and 639–649; these read RSLS…YSNV and SSSSLMFNQSS.

This sequence belongs to the protein kinase superfamily. Ser/Thr protein kinase family.

It is found in the cytoplasm. The enzyme catalyses L-seryl-[protein] + ATP = O-phospho-L-seryl-[protein] + ADP + H(+). The catalysed reaction is L-threonyl-[protein] + ATP = O-phospho-L-threonyl-[protein] + ADP + H(+). Has a role in meiosis. The protein is Serine/threonine-protein kinase ppk16 (ppk16) of Schizosaccharomyces pombe (strain 972 / ATCC 24843) (Fission yeast).